The chain runs to 262 residues: Phosphate import ATP-binding protein PstB (262 aa).

One can recognise an ABC transporter domain in the interval 16–257; the sequence is MEARHLSVRY…PSEQRTEDYV (242 aa). ATP is bound at residue 48–55; that stretch reads GPSGCGKS.

The protein belongs to the ABC transporter superfamily. Phosphate importer (TC 3.A.1.7) family. In terms of assembly, the complex is composed of two ATP-binding proteins (PstB), two transmembrane proteins (PstC and PstA) and a solute-binding protein (PstS).

It is found in the cell inner membrane. The enzyme catalyses phosphate(out) + ATP + H2O = ADP + 2 phosphate(in) + H(+). In terms of biological role, part of the ABC transporter complex PstSACB involved in phosphate import. Responsible for energy coupling to the transport system. The chain is Phosphate import ATP-binding protein PstB from Anaeromyxobacter dehalogenans (strain 2CP-C).